A 1260-amino-acid chain; its full sequence is Phosphatidylinositol 3,4,5-trisphosphate 5-phosphatase 2 (1260 aa).

The region spanning 25-121 (WYHRDLSRAA…GLVCALLLPV (97 aa)) is the SH2 domain. The span at 126 to 136 (ELDPPDERDAS) shows a compositional bias: basic and acidic residues. The tract at residues 126 to 178 (ELDPPDERDASDGEDEKPPLPPRSGTSVSAPLGPSSPPAAPEPPTPAVESAPN) is disordered. Residue serine 136 is modified to Phosphoserine. The segment covering 159-171 (PSSPPAAPEPPTP) has biased composition (pro residues). Serine 243 and serine 355 each carry phosphoserine. Tyrosine 888 carries the post-translational modification Phosphotyrosine. Serine 892 carries the phosphoserine modification. Positions 899 to 1120 (GAKSKAPSVS…FLGEAAGGDD (222 aa)) are disordered. Pro residues predominate over residues 940-952 (PPPTGRPPAPPRA). Residues 946-951 (PPAPPR) carry the SH3-binding motif. Basic and acidic residues predominate over residues 953–967 (APREEPLTPRLKPEG). Phosphothreonine is present on threonine 960. The short motif at 985–988 (NPAY) is the NPXY motif element. At tyrosine 988 the chain carries Phosphotyrosine. 3 stretches are compositionally biased toward pro residues: residues 998 to 1013 (LLPP…PVPP), 1050 to 1061 (LPPPDFPPPPLP), and 1090 to 1108 (LPPP…PLPP). At serine 1133 the chain carries Phosphoserine. Position 1164 is a phosphotyrosine (tyrosine 1164). The disordered stretch occupies residues 1181–1200 (EDLAEEAPCPQAGRTGGLGE). The SAM domain maps to 1198–1260 (LGEAGMGAWL…LLLDTLQLSK (63 aa)). Position 1259 is a phosphoserine (serine 1259).

Belongs to the inositol 1,4,5-trisphosphate 5-phosphatase family. As to quaternary structure, interacts with tyrosine phosphorylated form of SHC1. Interacts with EGFR. Upon stimulation by the EGF signaling pathway, it forms a complex with SHC1 and EGFR. Interacts with cytoskeletal protein SORBS3/vinexin, promoting its localization to the periphery of cells. Forms a complex with filamin (FLNA or FLNB), actin, GPIb (GP1BA or GP1BB) that regulates cortical and submembraneous actin. Interacts with c-Met/MET, when c-Met/MET is phosphorylated on 'Tyr-1356'. Interacts with p130Cas/BCAR1. Interacts with CENTD3/ARAP3 via its SAM domain. Interacts with c-Cbl/CBL and CAP/SORBS1. Interacts with activated EPHA2 receptor. Interacts with receptor FCGR2A. Interacts with receptor FCGR2B. Interacts with tyrosine kinase ABL1. Interacts with tyrosine kinase TEC. Interacts with CSF1R. Interacts (via N-terminus) with SH3YL1 (via SH3 domain). Interacts with FCRL6 (tyrosine phosphorylated form). Interacts (via SH2 domain) with tyrosine phosphorylated KLRC1 (via ITIM). Interacts with NEDD9/HEF1. Tyrosine phosphorylated by the members of the SRC family after exposure to a diverse array of extracellular stimuli such as insulin, growth factors such as EGF or PDGF, chemokines, integrin ligands and hypertonic and oxidative stress. May be phosphorylated upon IgG receptor FCGR2B-binding. Phosphorylated at Tyr-988 following cell attachment and spreading. Phosphorylated at Tyr-1164 following EGF signaling pathway stimulation. Expressed abundantly in skeletal muscle tissue.

It is found in the cytoplasm. It localises to the cytosol. The protein localises to the cytoskeleton. Its subcellular location is the membrane. The protein resides in the cell projection. It is found in the filopodium. It localises to the lamellipodium. The protein localises to the basal cell membrane. Its subcellular location is the nucleus. The protein resides in the nucleus speckle. It is found in the spindle pole. The catalysed reaction is a 1,2-diacyl-sn-glycero-3-phospho-(1D-myo-inositol-3,4,5-trisphosphate) + H2O = a 1,2-diacyl-sn-glycero-3-phospho-(1D-myo-inositol-3,4-bisphosphate) + phosphate. The enzyme catalyses 1,2-dioctanoyl-sn-glycero-3-phospho-(1D-myo-inositol-3,4,5-trisphosphate) + H2O = 1,2-dioctanoyl-sn-glycero-3-phospho-(1D-myo-inositol-3,4-bisphosphate) + phosphate. It carries out the reaction 1,2-dihexadecanoyl-sn-glycero-3-phospho-(1D-myo-inositol-3,4,5-trisphosphate) + H2O = 1,2-dihexadecanoyl-sn-glycero-3-phospho-(1D-myo-inositol-3,4-bisphosphate) + phosphate. Its activity is regulated as follows. Activated upon translocation to the sites of synthesis of PtdIns(3,4,5)P3 in the membrane. Enzymatic activity is enhanced in the presence of phosphatidylserine. Functionally, phosphatidylinositol (PtdIns) phosphatase that specifically hydrolyzes the 5-phosphate of phosphatidylinositol-3,4,5-trisphosphate (PtdIns(3,4,5)P3) to produce PtdIns(3,4)P2, thereby negatively regulating the PI3K (phosphoinositide 3-kinase) pathways. Required for correct mitotic spindle orientation and therefore progression of mitosis. Plays a central role in regulation of PI3K-dependent insulin signaling, although the precise molecular mechanisms and signaling pathways remain unclear. While overexpression reduces both insulin-stimulated MAP kinase and Akt activation, its absence does not affect insulin signaling or GLUT4 trafficking. Confers resistance to dietary obesity. May act by regulating AKT2, but not AKT1, phosphorylation at the plasma membrane. Part of a signaling pathway that regulates actin cytoskeleton remodeling. Required for the maintenance and dynamic remodeling of actin structures as well as in endocytosis, having a major impact on ligand-induced EGFR internalization and degradation. Participates in regulation of cortical and submembraneous actin by hydrolyzing PtdIns(3,4,5)P3 thereby regulating membrane ruffling. Regulates cell adhesion and cell spreading. Required for HGF-mediated lamellipodium formation, cell scattering and spreading. Acts as a negative regulator of EPHA2 receptor endocytosis by inhibiting via PI3K-dependent Rac1 activation. Acts as a regulator of neuritogenesis by regulating PtdIns(3,4,5)P3 level and is required to form an initial protrusive pattern, and later, maintain proper neurite outgrowth. Acts as a negative regulator of the FC-gamma-RIIA receptor (FCGR2A). Mediates signaling from the FC-gamma-RIIB receptor (FCGR2B), playing a central role in terminating signal transduction from activating immune/hematopoietic cell receptor systems. Involved in EGF signaling pathway. Upon stimulation by EGF, it is recruited by EGFR and dephosphorylates PtdIns(3,4,5)P3. Plays a negative role in regulating the PI3K-PKB pathway, possibly by inhibiting PKB activity. Down-regulates Fc-gamma-R-mediated phagocytosis in macrophages independently of INPP5D/SHIP1. In macrophages, down-regulates NF-kappa-B-dependent gene transcription by regulating macrophage colony-stimulating factor (M-CSF)-induced signaling. Plays a role in the localization of AURKA and NEDD9/HEF1 to the basolateral membrane at interphase in polarized cysts, thereby mediates cell cycle homeostasis, cell polarization and cilia assembly. Additionally promotion of cilia growth is also facilitated by hydrolysis of (PtdIns(3,4,5)P3) to PtdIns(3,4)P2. Promotes formation of apical membrane-initiation sites during the initial stages of lumen formation via Rho family-induced actin filament organization and CTNNB1 localization to cell-cell contacts. May also hydrolyze PtdIns(1,3,4,5)P4, and could thus affect the levels of the higher inositol polyphosphates like InsP6. Involved in endochondral ossification. This chain is Phosphatidylinositol 3,4,5-trisphosphate 5-phosphatase 2, found in Sus scrofa (Pig).